The following is a 94-amino-acid chain: UPF0768 protein YBL029C-A (94 aa).

This sequence belongs to the UPF0768 family.

Its subcellular location is the cell membrane. The protein is UPF0768 protein YBL029C-A of Saccharomyces cerevisiae (strain ATCC 204508 / S288c) (Baker's yeast).